The following is a 326-amino-acid chain: 4-hydroxy-3-methylbut-2-enyl diphosphate reductase (326 aa).

[4Fe-4S] cluster is bound at residue C22. The (2E)-4-hydroxy-3-methylbut-2-enyl diphosphate site is built by H51 and H84. 2 residues coordinate dimethylallyl diphosphate: H51 and H84. Isopentenyl diphosphate is bound by residues H51 and H84. Residue C106 coordinates [4Fe-4S] cluster. H134 is a binding site for (2E)-4-hydroxy-3-methylbut-2-enyl diphosphate. H134 contacts dimethylallyl diphosphate. H134 is a binding site for isopentenyl diphosphate. The active-site Proton donor is E136. (2E)-4-hydroxy-3-methylbut-2-enyl diphosphate is bound at residue T174. Residue C204 coordinates [4Fe-4S] cluster. (2E)-4-hydroxy-3-methylbut-2-enyl diphosphate contacts are provided by S232, S233, N234, and S276. Dimethylallyl diphosphate is bound by residues S232, S233, N234, and S276. S232, S233, N234, and S276 together coordinate isopentenyl diphosphate.

Belongs to the IspH family. It depends on [4Fe-4S] cluster as a cofactor.

The catalysed reaction is isopentenyl diphosphate + 2 oxidized [2Fe-2S]-[ferredoxin] + H2O = (2E)-4-hydroxy-3-methylbut-2-enyl diphosphate + 2 reduced [2Fe-2S]-[ferredoxin] + 2 H(+). It catalyses the reaction dimethylallyl diphosphate + 2 oxidized [2Fe-2S]-[ferredoxin] + H2O = (2E)-4-hydroxy-3-methylbut-2-enyl diphosphate + 2 reduced [2Fe-2S]-[ferredoxin] + 2 H(+). It functions in the pathway isoprenoid biosynthesis; dimethylallyl diphosphate biosynthesis; dimethylallyl diphosphate from (2E)-4-hydroxy-3-methylbutenyl diphosphate: step 1/1. It participates in isoprenoid biosynthesis; isopentenyl diphosphate biosynthesis via DXP pathway; isopentenyl diphosphate from 1-deoxy-D-xylulose 5-phosphate: step 6/6. Catalyzes the conversion of 1-hydroxy-2-methyl-2-(E)-butenyl 4-diphosphate (HMBPP) into a mixture of isopentenyl diphosphate (IPP) and dimethylallyl diphosphate (DMAPP). Acts in the terminal step of the DOXP/MEP pathway for isoprenoid precursor biosynthesis. This Bordetella bronchiseptica (strain ATCC BAA-588 / NCTC 13252 / RB50) (Alcaligenes bronchisepticus) protein is 4-hydroxy-3-methylbut-2-enyl diphosphate reductase.